The chain runs to 578 residues: Proline--tRNA ligase (578 aa).

Belongs to the class-II aminoacyl-tRNA synthetase family. ProS type 1 subfamily. In terms of assembly, homodimer.

The protein resides in the cytoplasm. It catalyses the reaction tRNA(Pro) + L-proline + ATP = L-prolyl-tRNA(Pro) + AMP + diphosphate. Catalyzes the attachment of proline to tRNA(Pro) in a two-step reaction: proline is first activated by ATP to form Pro-AMP and then transferred to the acceptor end of tRNA(Pro). As ProRS can inadvertently accommodate and process non-cognate amino acids such as alanine and cysteine, to avoid such errors it has two additional distinct editing activities against alanine. One activity is designated as 'pretransfer' editing and involves the tRNA(Pro)-independent hydrolysis of activated Ala-AMP. The other activity is designated 'posttransfer' editing and involves deacylation of mischarged Ala-tRNA(Pro). The misacylated Cys-tRNA(Pro) is not edited by ProRS. In Brachyspira hyodysenteriae (strain ATCC 49526 / WA1), this protein is Proline--tRNA ligase.